Reading from the N-terminus, the 1481-residue chain is Cystic fibrosis transmembrane conductance regulator (1481 aa).

The Cytoplasmic portion of the chain corresponds to 1-77 (MQRSPLEKAS…KLINALRRCF (77 aa)). The helical transmembrane segment at 78 to 98 (FWRFMFYGILLYLGEVTKAVQ) threads the bilayer. Residues 81–365 (FMFYGILLYL…WAVQTWYDSL (285 aa)) enclose the ABC transmembrane type-1 1 domain. Residues 99-122 (PLLLGRIIASYDPDNKEERSIAIY) are Extracellular-facing. Residues 123-146 (LGIGLCLLFIVRTLLLHPAIFGLH) form a helical membrane-spanning segment. Residues 147 to 195 (HIGMQMRIAMFSLIYKKTLKLSSRVLDKISIGQLVSLLSNNLNKFDEGL) are Cytoplasmic-facing. A helical transmembrane segment spans residues 196 to 216 (ALAHFVWIVPLQVALLMGLIW). Residues 217 to 222 (ELLQAS) are Extracellular-facing. A helical transmembrane segment spans residues 223-243 (AFCGLGFLIVLALFQAGLGRM). The Cytoplasmic segment spans residues 244–298 (MMKYRDQRAGKINERLVITSEMIENIQSVKAYCWEEAMEKMIENLRQTELKLTRK). The helical transmembrane segment at 299–319 (AAYVRYFNSSAFFFSGFFVVF) threads the bilayer. Residues 320–339 (LSVLPYALIKGIVLRKIFTT) are Extracellular-facing. The helical transmembrane segment at 340 to 358 (ISFCIVLRMAVTRQFPWAV) threads the bilayer. At 359–858 (QTWYDSLGAI…YLRYITVHKS (500 aa)) the chain is on the cytoplasmic side. Residues tryptophan 401, serine 434, 458–465 (GSTGAGKT), and glutamine 493 each bind ATP. The ABC transporter 1 domain maps to 423-646 (NDDDSLFFSN…RPDFSSKLMG (224 aa)). Cysteine 524 is lipidated: S-palmitoyl cysteine. Residues serine 549 and serine 660 each carry the phosphoserine modification. Residues 654 to 831 (SAERRNSILT…EEINEEDLKE (178 aa)) form a disordered R region region. Serine 670 bears the Phosphoserine; by PKA mark. Position 686 is a phosphoserine (serine 686). A Glycyl lysine isopeptide (Lys-Gly) (interchain with G-Cter in ubiquitin) cross-link involves residue lysine 688. Phosphoserine occurs at positions 700 and 712. Residue threonine 717 is modified to Phosphothreonine. Residues serine 737, serine 753, serine 768, serine 790, serine 795, and serine 813 each carry the phosphoserine modification. The chain crosses the membrane as a helical span at residues 859 to 879 (LIFVLIWCLVIFLAEVAASLV). Residues 859 to 1155 (LIFVLIWCLV…AVNSSIDVDS (297 aa)) enclose the ABC transmembrane type-1 2 domain. At 880-918 (VLWFLGNTPPQDKGNSTYSRNNSYAVIITRTSSYYVFYI) the chain is on the extracellular side. N-linked (GlcNAc...) asparagine glycans are attached at residues asparagine 894 and asparagine 900. A discontinuously helical transmembrane segment spans residues 919–939 (YVGVADTLLAMGFFRGLPLVH). The Cytoplasmic segment spans residues 940 to 990 (TLITVSKILHHKMLHSVLQAPMSTLNTLKAGGILNRFSKDIAILDDLLPLT). A helical membrane pass occupies residues 991–1011 (IFDFIQLLLIVIGAIAVVAVL). Residues 1012-1013 (QP) are Extracellular-facing. A helical membrane pass occupies residues 1014–1034 (YIFVATVPVIVAFIMLRAYFL). The Cytoplasmic portion of the chain corresponds to 1035-1095 (QTSQQLKQLE…TANWFLYLST (61 aa)). The chain crosses the membrane as a helical span at residues 1096-1116 (LRWFQMRIEMIFVIFFIAVTF). The Extracellular portion of the chain corresponds to 1117 to 1130 (ISILTTGEGEGTVG). Residues 1131–1151 (IILTLAMNIMSTLQWAVNSSI) form a helical membrane-spanning segment. Residues 1152–1481 (DVDSLMRSVS…TEEEVQDTRL (330 aa)) lie on the Cytoplasmic side of the membrane. The 234-residue stretch at 1211–1444 (MTVKDLTAKY…RSLFRQAISP (234 aa)) folds into the ABC transporter 2 domain. ATP-binding positions include tyrosine 1220 and 1245 to 1252 (GRTGSGKS). Positions 1387 to 1481 (RTLKQAFADC…TEEEVQDTRL (95 aa)) are interaction with GORASP2. The S-palmitoyl cysteine moiety is linked to residue cysteine 1396. Phosphoserine is present on residues serine 1445 and serine 1457. Residues 1462-1481 (QPQIAALKEETEEEVQDTRL) are disordered. Residues 1471 to 1481 (ETEEEVQDTRL) are compositionally biased toward acidic residues. The short motif at 1479–1481 (TRL) is the PDZ-binding element.

It belongs to the ABC transporter superfamily. ABCC family. CFTR transporter (TC 3.A.1.202) subfamily. As to quaternary structure, monomer; does not require oligomerization for channel activity. May form oligomers in the membrane. Interacts with SLC26A3, SLC26A6 and NHERF1. Interacts with SHANK2. Interacts with MYO6. Interacts (via C-terminus) with GOPC (via PDZ domain); this promotes CFTR internalization and thereby decreases channel activity. Interacts with SLC4A7 through NHERF1. Found in a complex with MYO5B and RAB11A. Interacts with ANO1. Interacts with SLC26A8. Interacts with AHCYL1; the interaction increases CFTR activity. Interacts with CSE1L. The core-glycosylated form interacts with GORASP2 (via PDZ GRASP-type 1 domain) in respone to ER stress. Interacts with MARCHF2; the interaction leads to CFTR ubiqtuitination and degradation. Interacts with ADGRG2. In terms of processing, N-glycosylated. Phosphorylated; cAMP treatment promotes phosphorylation and activates the channel. Dephosphorylation decreases the ATPase activity (in vitro). Phosphorylation at PKA sites activates the channel. Phosphorylation at PKC sites enhances the response to phosphorylation by PKA. Phosphorylated by AMPK; this inhibits channel activity. Post-translationally, ubiquitinated, leading to its degradation in the lysosome. Deubiquitination by USP10 in early endosomes enhances its endocytic recycling to the cell membrane. Ubiquitinated by RNF185 during ER stress. Ubiquitinated by MARCHF2.

It localises to the apical cell membrane. The protein localises to the early endosome membrane. The protein resides in the cell membrane. Its subcellular location is the recycling endosome membrane. It is found in the endoplasmic reticulum membrane. It localises to the nucleus. The enzyme catalyses ATP + H2O + closed Cl(-) channel = ADP + phosphate + open Cl(-) channel.. The catalysed reaction is chloride(in) = chloride(out). It carries out the reaction hydrogencarbonate(in) = hydrogencarbonate(out). It catalyses the reaction ATP + H2O = ADP + phosphate + H(+). In terms of biological role, epithelial ion channel that plays an important role in the regulation of epithelial ion and water transport and fluid homeostasis. Mediates the transport of chloride ions across the cell membrane. Possesses an intrinsic ATPase activity and utilizes ATP to gate its channel; the passive flow of anions through the channel is gated by cycles of ATP binding and hydrolysis by the ATP-binding domains. The ion channel is also permeable to HCO(3)(-); selectivity depends on the extracellular chloride concentration. Exerts its function also by modulating the activity of other ion channels and transporters. Contributes to the regulation of the pH and the ion content of the epithelial fluid layer. Modulates the activity of the epithelial sodium channel (ENaC) complex, in part by regulating the cell surface expression of the ENaC complex. May regulate bicarbonate secretion and salvage in epithelial cells by regulating the transporter SLC4A7. Can inhibit the chloride channel activity of ANO1. Plays a role in the chloride and bicarbonate homeostasis during sperm epididymal maturation and capacitation. This Chlorocebus aethiops (Green monkey) protein is Cystic fibrosis transmembrane conductance regulator.